We begin with the raw amino-acid sequence, 417 residues long: Phosphoglycerate kinase (417 aa).

Residues Val-23, Asp-24, Phe-25, Asn-26, Gln-38, Arg-39, Ser-62, His-63, Gly-65, Arg-66, Leu-121, Arg-122, His-169, and Arg-170 each coordinate (2R)-3-phosphoglycerate. Position 213 (Gly-213) interacts with ADP. CDP is bound at residue Gly-213. 2 residues coordinate AMP: Ala-214 and Lys-215. Ala-214 contacts ATP. Residue Ala-214 coordinates Mg(2+). Asp-218 contributes to the CDP binding site. Asp-218 provides a ligand contact to Mg(2+). Residue Lys-219 participates in AMP binding. Lys-219 lines the ATP pocket. Position 237 (Gly-237) interacts with ADP. Gly-237 contacts CDP. The AMP site is built by Gly-238 and Gly-312. Gly-238 and Gly-312 together coordinate ATP. CDP is bound by residues Gly-337 and Phe-342. Phe-342 contacts ADP. An AMP-binding site is contributed by Glu-343. ATP contacts are provided by Glu-343, Asp-374, and Thr-375. Asp-374 provides a ligand contact to Mg(2+).

This sequence belongs to the phosphoglycerate kinase family. As to quaternary structure, monomer. Requires Mg(2+) as cofactor.

The protein localises to the cytoplasm. Its subcellular location is the secreted. It localises to the cell wall. It is found in the mitochondrion. It carries out the reaction (2R)-3-phosphoglycerate + ATP = (2R)-3-phospho-glyceroyl phosphate + ADP. It participates in carbohydrate degradation; glycolysis; pyruvate from D-glyceraldehyde 3-phosphate: step 2/5. Its function is as follows. Catalyzes one of the two ATP producing reactions in the glycolytic pathway via the reversible conversion of 1,3-diphosphoglycerate to 3-phosphoglycerate. Both L- and D- forms of purine and pyrimidine nucleotides can be used as substrates, but the activity is much lower on pyrimidines. Negatively regulates the biosynthesis of acetyl-CoA from pyruvate in the mitochondrion. In Candida albicans (strain SC5314 / ATCC MYA-2876) (Yeast), this protein is Phosphoglycerate kinase (PGK1).